We begin with the raw amino-acid sequence, 153 residues long: Ubiquitin-conjugating enzyme E2 ubc-18 (153 aa).

The 148-residue stretch at 2-149 (SATRRLQKEL…AEEHTRKHAE (148 aa)) folds into the UBC core domain. The Glycyl thioester intermediate role is filled by Cys-86.

The protein belongs to the ubiquitin-conjugating enzyme family. In terms of assembly, interacts with E3 ubiquitin-protein ligase wwp-1. Interacts with RBR-type E3 ubiquitin transferase ari-1.1. In terms of tissue distribution, expressed in neurons localized in the head and tail of adults.

The catalysed reaction is S-ubiquitinyl-[E1 ubiquitin-activating enzyme]-L-cysteine + [E2 ubiquitin-conjugating enzyme]-L-cysteine = [E1 ubiquitin-activating enzyme]-L-cysteine + S-ubiquitinyl-[E2 ubiquitin-conjugating enzyme]-L-cysteine.. Its function is as follows. Ubiquitin-conjugating enzyme E2. Accepts ubiquitin from the E1 complex and catalyzes its covalent attachment to other proteins. Required for diet restriction-mediated lifespan extension, probably acting as part of a complex with ubiquitin-protein ligase wwp-1. Acts redundantly with lin-35/Rb in the regulation of pharyngeal morphogenesis during embryonic development by negatively regulating the expression of proteins such as sup-35. This is Ubiquitin-conjugating enzyme E2 ubc-18 from Caenorhabditis elegans.